The chain runs to 375 residues: Probable serine/threonine-protein kinase PBL28 (375 aa).

A Phosphothreonine modification is found at Thr65. Positions 76 to 356 constitute a Protein kinase domain; it reads FSDENLLGKG…MDCVKELQLI (281 aa). ATP is bound by residues 82 to 90 and Lys104; that span reads LGKGGFGRV. A Phosphotyrosine modification is found at Tyr152. Asp205 (proton acceptor) is an active-site residue. Thr245 carries the post-translational modification Phosphothreonine. Tyr253 is subject to Phosphotyrosine.

It belongs to the protein kinase superfamily. Ser/Thr protein kinase family.

The protein localises to the cell membrane. It carries out the reaction L-seryl-[protein] + ATP = O-phospho-L-seryl-[protein] + ADP + H(+). It catalyses the reaction L-threonyl-[protein] + ATP = O-phospho-L-threonyl-[protein] + ADP + H(+). Functionally, may be involved in plant defense signaling. This Arabidopsis thaliana (Mouse-ear cress) protein is Probable serine/threonine-protein kinase PBL28.